The following is a 148-amino-acid chain: Ribonuclease 4 (148 aa).

The signal sequence occupies residues 1–29; that stretch reads MMDLQRTQSLLLLLVLTLLGLGLVQPSYG. Gln-30 is modified (pyrrolidone carboxylic acid). Arg-36, His-41, Lys-69, Asn-72, and Thr-73 together coordinate dUMP. The active-site Proton acceptor is His-41. Disulfide bonds link Cys-54/Cys-110, Cys-68/Cys-121, Cys-86/Cys-136, and Cys-93/Cys-100. His-145 functions as the Proton donor in the catalytic mechanism. Phe-146 is a dUMP binding site.

This sequence belongs to the pancreatic ribonuclease family. As to expression, expressed in the cortical tubules of the kidney (at protein level). Also expressed in the medullary tubules of the kidney.

It localises to the secreted. Functionally, cleaves preferentially after uridine bases. Has antimicrobial activity against uropathogenic E.coli (UPEC). Probably contributes to urinary tract sterility. The protein is Ribonuclease 4 (Rnase4) of Mus musculus (Mouse).